Consider the following 572-residue polypeptide: Acetyl-coenzyme A synthetase (572 aa).

T260 contributes to the CoA binding site. ATP is bound by residues 333–335 (GEP), 354–359 (DTWWMT), D440, and R455. Residue S463 participates in CoA binding. R466 contributes to the ATP binding site. Mg(2+) contacts are provided by V477, H479, and I482. K524 serves as a coordination point for CoA. The residue at position 549 (K549) is an N6-acetyllysine.

The protein belongs to the ATP-dependent AMP-binding enzyme family. As to quaternary structure, interacts with FloT. Requires Mg(2+) as cofactor. In terms of processing, acetylated. Deacetylation by the SIR2-homolog deacetylase activates the enzyme.

The protein localises to the cell membrane. It localises to the membrane raft. The enzyme catalyses acetate + ATP + CoA = acetyl-CoA + AMP + diphosphate. In terms of biological role, catalyzes the conversion of acetate into acetyl-CoA (AcCoA), an essential intermediate at the junction of anabolic and catabolic pathways. AcsA undergoes a two-step reaction. In the first half reaction, AcsA combines acetate with ATP to form acetyl-adenylate (AcAMP) intermediate. In the second half reaction, it can then transfer the acetyl group from AcAMP to the sulfhydryl group of CoA, forming the product AcCoA. Has a role in growth and sporulation on acetate. The polypeptide is Acetyl-coenzyme A synthetase (acsA) (Bacillus subtilis (strain 168)).